The primary structure comprises 317 residues: MSQPTPAVRTFQDLILALQQYWAEQGCVVLQPYDMEVGAGTFHTATFLRAIGPETWNAAYVQPSRRPTDGRYGENPNRLQHYYQFQVVLKPNPDNFQELYLGSLKHVGLDPLVHDIRFVEDNWESPTLGAWGLGWEVWLNGMEVTQFTYFQQAGGIECYPVTGEITYGLERLAMYLQGVDSVYDLVWADGPFGKVTYGDVFHQNEVEQSTYNFEHANVDKLFELFDFYESEAKRLIELDQPLPLPSYEMVLKASHTFNLLDARRAISVTARQQYILRVRTLARSVAQAYLLARAKLGFPMATPDLRDEVLAKLEAAQ.

Belongs to the class-II aminoacyl-tRNA synthetase family. In terms of assembly, tetramer of two alpha and two beta subunits.

It is found in the cytoplasm. It catalyses the reaction tRNA(Gly) + glycine + ATP = glycyl-tRNA(Gly) + AMP + diphosphate. This chain is Glycine--tRNA ligase alpha subunit, found in Pseudomonas fluorescens (strain SBW25).